The primary structure comprises 278 residues: 4-hydroxy-tetrahydrodipicolinate reductase (278 aa).

Residues 13-18 (GAAGKM) and 111-113 (GTT) each bind NAD(+). The active-site Proton donor/acceptor is His-167. His-168 serves as a coordination point for (S)-2,3,4,5-tetrahydrodipicolinate. Catalysis depends on Lys-171, which acts as the Proton donor. A (S)-2,3,4,5-tetrahydrodipicolinate-binding site is contributed by 177–178 (GT).

It belongs to the DapB family.

It localises to the cytoplasm. It carries out the reaction (S)-2,3,4,5-tetrahydrodipicolinate + NAD(+) + H2O = (2S,4S)-4-hydroxy-2,3,4,5-tetrahydrodipicolinate + NADH + H(+). The enzyme catalyses (S)-2,3,4,5-tetrahydrodipicolinate + NADP(+) + H2O = (2S,4S)-4-hydroxy-2,3,4,5-tetrahydrodipicolinate + NADPH + H(+). It participates in amino-acid biosynthesis; L-lysine biosynthesis via DAP pathway; (S)-tetrahydrodipicolinate from L-aspartate: step 4/4. Catalyzes the conversion of 4-hydroxy-tetrahydrodipicolinate (HTPA) to tetrahydrodipicolinate. The polypeptide is 4-hydroxy-tetrahydrodipicolinate reductase (Mastigocladus laminosus (Fischerella sp.)).